Consider the following 256-residue polypeptide: Peptidyl-prolyl cis-trans isomerase FKBP19, chloroplastic (256 aa).

The transit peptide at methionine 1–valine 29 directs the protein to the chloroplast. A thylakoid-targeting transit peptide spans alanine 30 to alanine 88. The PPIase FKBP-type domain occupies glycine 135–valine 254. The residue at position 164 (serine 164) is a Phosphoserine.

Belongs to the FKBP-type PPIase family.

The protein localises to the plastid. Its subcellular location is the chloroplast thylakoid lumen. The catalysed reaction is [protein]-peptidylproline (omega=180) = [protein]-peptidylproline (omega=0). Functionally, PPIases accelerate the folding of proteins. It catalyzes the cis-trans isomerization of proline imidic peptide bonds in oligopeptides. In Arabidopsis thaliana (Mouse-ear cress), this protein is Peptidyl-prolyl cis-trans isomerase FKBP19, chloroplastic (FKBP19).